The primary structure comprises 195 residues: Molybdenum cofactor guanylyltransferase (195 aa).

GTP-binding positions include 12 to 14 (LAG), Lys-25, Asn-53, Asp-70, and Asp-100. A Mg(2+)-binding site is contributed by Asp-100.

It belongs to the MobA family. As to quaternary structure, monomer. Mg(2+) serves as cofactor.

The protein resides in the cytoplasm. It carries out the reaction Mo-molybdopterin + GTP + H(+) = Mo-molybdopterin guanine dinucleotide + diphosphate. Functionally, transfers a GMP moiety from GTP to Mo-molybdopterin (Mo-MPT) cofactor (Moco or molybdenum cofactor) to form Mo-molybdopterin guanine dinucleotide (Mo-MGD) cofactor. The chain is Molybdenum cofactor guanylyltransferase from Vibrio parahaemolyticus serotype O3:K6 (strain RIMD 2210633).